A 520-amino-acid polypeptide reads, in one-letter code: Putative hydrolase Mb2247c (520 aa).

Positions 1–34 (MAAMWRRRPLSSALLSFGLLLGGLPLAAPPLAGA) are cleaved as a signal peptide. Residues 104 to 124 (FGALLVNPGGPGASAVDMVAA) form a helical membrane-spanning segment. The 299-residue stretch at 105–403 (GALLVNPGGP…APTPADPAAW (299 aa)) folds into the AB hydrolase-1 domain. Ser-232 acts as the Nucleophile in catalysis. Residue Asp-461 is part of the active site. His-488 acts as the Proton donor in catalysis.

Belongs to the peptidase S33 family.

The protein localises to the cell membrane. The polypeptide is Putative hydrolase Mb2247c (Mycobacterium bovis (strain ATCC BAA-935 / AF2122/97)).